Reading from the N-terminus, the 419-residue chain is eIF5-mimic protein 2-A (419 aa).

Residues 1-15 (MNNQKQQKPTLTGQR) show a composition bias toward polar residues. The tract at residues 1 to 29 (MNNQKQQKPTLTGQRFKTRKRDEKERFDP) is disordered. The region spanning 247–414 (NQQSIGARKE…KNAEEESESE (168 aa)) is the W2 domain.

Belongs to the BZW family.

Functionally, translation initiation regulator which may repress repeat-associated non-AUG (RAN) initiated translation probably by acting as a competitive inhibitor of eukaryotic translation initiation factor 5 (EIF5) function. Enhances histone H4 gene transcription but does not seem to bind DNA directly. The protein is eIF5-mimic protein 2-A (bzw1a) of Danio rerio (Zebrafish).